Here is a 183-residue protein sequence, read N- to C-terminus: ADP-ribosylation factor-like protein 5 (183 aa).

Residues 27–34, 70–74, and 129–132 each bind GTP; these read GLNAAGKT, DLGGQ, and NKQD.

It belongs to the small GTPase superfamily. Arf family.

Its function is as follows. May bind and exchange GTP and GDP. This is ADP-ribosylation factor-like protein 5 (arl5) from Dictyostelium discoideum (Social amoeba).